The following is a 138-amino-acid chain: Basic phospholipase A2 homolog MjTX-I (138 aa).

An N-terminal signal peptide occupies residues Met1–Gly16. Suramin is bound at residue Val34. 7 cysteine pairs are disulfide-bonded: Cys42-Cys132, Cys44-Cys60, Cys59-Cys111, Cys65-Cys138, Cys66-Cys104, Cys73-Cys97, and Cys91-Cys102. Asn43 serves as a coordination point for varespladib. Suramin is bound by residues Gly45 and Gly48. Residues His63 and Lys64 each contribute to the varespladib site. Lys85 serves as a coordination point for suramin.

Belongs to the phospholipase A2 family. Group II subfamily. K49 sub-subfamily. As to quaternary structure, monomer in solution. Homodimer; non-covalently linked (probable conventional/extended dimer conformation). Homotetramer (dimer of homodimer (probable conventional/extended dimer conformation)); non-covalently linked. Homooligomer. As to expression, expressed by the venom gland.

The protein localises to the secreted. Myotoxin activity is inhibited by suramin and varespladib. Inhibition by suramin may be caused by (i) distortion of MDiS from both monomers impairing the membrane disruption mechanism by the toxin and (ii) surface electrostatic changes of the complex that interfere with the toxin membrane dockage process (putative-MDoS is partially hidden). Inhibition by varespladib is probably through varespladib binding to MDoS. Snake venom phospholipase A2 homolog that lacks enzymatic activity. In vivo, it displays local myotoxin and edema-inducing activities and is lethal by intraperitoneal injection. The myotoxicity effect is weaker in comparison to other myotoxins, probably due to the formation of high molecular weight complexes and to the oligomeric conformation (conventional dimer). It shows specificity toward neurons and myotubes, but not on a variety of other cell types. This PLA2 excites a cohort of sensory neurons via ATP release and consequent activation of P2RX2 and/or P2RX3 purinergic receptors. Pannexin hemichannels act as downstream mediators of toxin-evoked ATP release. In vivo, it elicits nonneurogenic inflammatory pain, thermal hyperalgesia, and mechanical allodynia, of which the latter is completely dependent on purinergic signaling. The protein is Basic phospholipase A2 homolog MjTX-I of Bothrops moojeni (Lance-headed viper).